We begin with the raw amino-acid sequence, 239 residues long: Orotidine 5'-phosphate decarboxylase (239 aa).

Substrate-binding positions include Asp-15, Lys-36, 63 to 72, Thr-127, Arg-189, Gln-198, Gly-218, and Arg-219; that span reads DLKFHDIPNT. Lys-65 (proton donor) is an active-site residue.

The protein belongs to the OMP decarboxylase family. Type 1 subfamily. Homodimer.

The enzyme catalyses orotidine 5'-phosphate + H(+) = UMP + CO2. The protein operates within pyrimidine metabolism; UMP biosynthesis via de novo pathway; UMP from orotate: step 2/2. Its function is as follows. Catalyzes the decarboxylation of orotidine 5'-monophosphate (OMP) to uridine 5'-monophosphate (UMP). This is Orotidine 5'-phosphate decarboxylase from Prochlorococcus marinus subsp. pastoris (strain CCMP1986 / NIES-2087 / MED4).